The chain runs to 141 residues: Nucleoside diphosphate kinase (141 aa).

ATP-binding residues include lysine 11, phenylalanine 59, arginine 87, threonine 93, arginine 104, and asparagine 114. Histidine 117 serves as the catalytic Pros-phosphohistidine intermediate.

The protein belongs to the NDK family. As to quaternary structure, homotetramer. Requires Mg(2+) as cofactor.

Its subcellular location is the cytoplasm. The catalysed reaction is a 2'-deoxyribonucleoside 5'-diphosphate + ATP = a 2'-deoxyribonucleoside 5'-triphosphate + ADP. It carries out the reaction a ribonucleoside 5'-diphosphate + ATP = a ribonucleoside 5'-triphosphate + ADP. Its function is as follows. Major role in the synthesis of nucleoside triphosphates other than ATP. The ATP gamma phosphate is transferred to the NDP beta phosphate via a ping-pong mechanism, using a phosphorylated active-site intermediate. In Cupriavidus taiwanensis (strain DSM 17343 / BCRC 17206 / CCUG 44338 / CIP 107171 / LMG 19424 / R1) (Ralstonia taiwanensis (strain LMG 19424)), this protein is Nucleoside diphosphate kinase.